A 488-amino-acid polypeptide reads, in one-letter code: MALSLTTSIALATILFFVYKFATRSKSTKNSLPEPWRLPIIGHMHHLIGTIPHRGVMDLARKYGSLMHLQLGEVSTIVVSSPKWAKEILTTYDITFANRPETLTGEIVAYHNTDIVLAPYGEYWRQLRKLCTLELLSVKKVKSFQSLREEECWNLVQEIKASGSGRPVNLSENIFKLIATILSRAAFGKGIKDQKEFTEIVKEILRQTGGFDVADIFPSKKFLHHLSGKRARLTSIHQKLDNLINNLVAEHTVKTSSKTNETLLDVLLRLKDSAEFPLTADNVKAIILDMFGAGTDTSSATIEWAISELIKCPRAMEKVQVELRKALNGKERIHEEDIQELSYLNLVIKETLRLHPPLPLVMPRECRQPVNLAGYDIPNKTKLIVNVFAINRDPEYWKDAETFIPERFENSSTTVMGAEYEYLPFGAGRRMCPGAALGLANVQLPLANILYHFNWKLPNGASYDQIDMTESFGATVQRKTELLLVPSF.

The chain crosses the membrane as a helical; Signal-anchor for type II membrane protein span at residues 7–23; sequence TSIALATILFFVYKFAT. Asn-169, Asn-260, Asn-379, and Asn-410 each carry an N-linked (GlcNAc...) asparagine glycan. Cys-432 is a heme binding site.

It belongs to the cytochrome P450 family. As to expression, expressed in floral glandular trichomes.

The protein localises to the endoplasmic reticulum membrane. The catalysed reaction is (+)-(R)-germacrene A + 3 reduced [NADPH--hemoprotein reductase] + 3 O2 = germacra-1(10),4,11(13)-trien-12-oate + 3 oxidized [NADPH--hemoprotein reductase] + 4 H2O + 4 H(+). It functions in the pathway secondary metabolite biosynthesis; terpenoid biosynthesis. Its function is as follows. Involved in the biosynthesis of germacrene-derived sesquiterpene lactones. Component of the parthenolide biosynthetic pathway; parthenolide and conjugates are promising anti-cancer drugs highly active against colon cancer cells. Catalyzes three consecutive oxidations of germacrene A to produce germacrene A acid. This is Germacrene A hydroxylase from Tanacetum parthenium (Feverfew).